Reading from the N-terminus, the 681-residue chain is Calpain-C (681 aa).

A Calpain catalytic domain is found at L18–D331. Residues T332–S481 are domain III. Residues C482–C514 form a linker region. A domain IV region spans residues Q515 to C681. The 36-residue stretch at A552–W587 folds into the EF-hand domain. D565, S567, S569, and R571 together coordinate Ca(2+).

This sequence belongs to the peptidase C2 family. As to expression, localized to the salivary glands in the larva.

Its subcellular location is the cytoplasm. In terms of biological role, not known; does not seem to have protease activity. This Drosophila melanogaster (Fruit fly) protein is Calpain-C.